A 365-amino-acid polypeptide reads, in one-letter code: sn-glycerol-3-phosphate import ATP-binding protein UgpC (365 aa).

The ABC transporter domain maps to 4–234 (LSLRNVQKHY…PASTFVAGFI (231 aa)). 36–43 (GPSGCGKS) is a binding site for ATP.

This sequence belongs to the ABC transporter superfamily. sn-glycerol-3-phosphate importer (TC 3.A.1.1.3) family. As to quaternary structure, the complex is composed of two ATP-binding proteins (UgpC), two transmembrane proteins (UgpA and UgpE) and a solute-binding protein (UgpB).

The protein resides in the cell inner membrane. The catalysed reaction is sn-glycerol 3-phosphate(out) + ATP + H2O = sn-glycerol 3-phosphate(in) + ADP + phosphate + H(+). Functionally, part of the ABC transporter complex UgpBAEC involved in sn-glycerol-3-phosphate (G3P) import. Responsible for energy coupling to the transport system. This is sn-glycerol-3-phosphate import ATP-binding protein UgpC from Ralstonia nicotianae (strain ATCC BAA-1114 / GMI1000) (Ralstonia solanacearum).